A 180-amino-acid polypeptide reads, in one-letter code: MKGGKRVQTARPNRINGEIRAQEVRLTGLEGEQLGIVSLREALEKAEEAGVDLVEISPNAEPPVCRIMDYGKFLYEKSKSSKEQKKKQKVIQVKEIKFRPGTDEGDYQVKLRSLIRFLEEGDKAKITLRFRGREMAHQQIGMEVLNRVKDDLQELAVVESFPTKIEGRQMIMVLAPKKKQ.

It belongs to the IF-3 family. In terms of assembly, monomer.

It is found in the cytoplasm. Its function is as follows. IF-3 binds to the 30S ribosomal subunit and shifts the equilibrium between 70S ribosomes and their 50S and 30S subunits in favor of the free subunits, thus enhancing the availability of 30S subunits on which protein synthesis initiation begins. The polypeptide is Translation initiation factor IF-3 (Escherichia coli (strain K12 / MC4100 / BW2952)).